A 266-amino-acid polypeptide reads, in one-letter code: Stomatin homolog PH1511 (266 aa).

The chain crosses the membrane as a helical span at residues 7 to 27 (FFVTSIILLFILIFLASAIKI). Coiled-coil stretches lie at residues 125 to 152 (GQAH…EATD) and 178 to 213 (RQAE…ISEH).

It belongs to the band 7/mec-2 family. In terms of assembly, homotrimer. Interacts with PH1510 and is cleaved by PH1510.

The protein resides in the membrane. The chain is Stomatin homolog PH1511 from Pyrococcus horikoshii (strain ATCC 700860 / DSM 12428 / JCM 9974 / NBRC 100139 / OT-3).